A 243-amino-acid polypeptide reads, in one-letter code: NADH-ubiquinone oxidoreductase chain 6 (243 aa).

5 consecutive transmembrane segments (helical) span residues 16–36, 41–61, 69–89, 104–124, and 201–221; these read ISSV…SVIV, IISV…LILL, AYLI…LMLI, IPLT…LLPY, and IWLF…IVII.

It belongs to the complex I subunit 6 family.

It is found in the mitochondrion membrane. It catalyses the reaction a ubiquinone + NADH + 5 H(+)(in) = a ubiquinol + NAD(+) + 4 H(+)(out). In terms of biological role, core subunit of the mitochondrial membrane respiratory chain NADH dehydrogenase (Complex I) that is believed to belong to the minimal assembly required for catalysis. Complex I functions in the transfer of electrons from NADH to the respiratory chain. The immediate electron acceptor for the enzyme is believed to be ubiquinone. The protein is NADH-ubiquinone oxidoreductase chain 6 (ndh-6) of Neurospora crassa (strain ATCC 24698 / 74-OR23-1A / CBS 708.71 / DSM 1257 / FGSC 987).